We begin with the raw amino-acid sequence, 156 residues long: Small ribosomal subunit protein uS7 (156 aa).

The protein belongs to the universal ribosomal protein uS7 family. Part of the 30S ribosomal subunit. Contacts proteins S9 and S11.

Functionally, one of the primary rRNA binding proteins, it binds directly to 16S rRNA where it nucleates assembly of the head domain of the 30S subunit. Is located at the subunit interface close to the decoding center, probably blocks exit of the E-site tRNA. This Clostridium tetani (strain Massachusetts / E88) protein is Small ribosomal subunit protein uS7.